The sequence spans 706 residues: MDKLTPSQWKVINKSYEPASTIKVIAGPGSGKTLTLLYKVLHLITVENIKPEEILIFSLTNKAVDSIIENLLSIFENSHTNKEIVHQIGCYTVHGLANRIVVENEGMINIIEEIGWRGLMKLLPPSKRTPHHFRSYKELEKVVKDYKLNNAKNNNPVIEKLVELMDNCKVMTNDDLIIRAKKYLELDSSDSDASSFTQDLRNKYKVVLIDEFQDLYPSLAPLITMICKGKQLIMFGDTNQSIYGFLGSNNEIMSQLDNLHPKNSTTVLKLFDNFRSTPEIISLASKIINRPLAEKQIIDDTDETPSELVRKLPSGVSPQIMTFDDLAAESEFIIDKITQLICSSAKFSDIAILSRTNSHLTAIASILKKYGIPYQKLKSQPDWMDDLRIQFLLDILKVCSLASDEKHNREFNTGDKWQSNFSILVTMSALKGIGDASIQALYKACSLKNLSIWKYLTMVPNFEWPLGLSIKKKMENYTSNLYEMIENDQVHQLDDPMELLEKVASITNNLNLNPTYFQSLSDAQSSLEFKTHLQEMAQVMKVSKSNKPPGISFVKWFLETYFDQTMVFHQSQQALQTTGPGTVKLSTIHSAKGLEFPIVFLTNGSMSNFPMDTNALYVGITRARNLLYMCNMKHERLVSKSSPYSRNIMSNNLFWTYYNKDLKRSVCDVKVTHGYNVQRYNQLRKNFGFYRAYSSLRGCKSVFRRI.

A UvrD-like helicase ATP-binding domain is found at 5–277; sequence TPSQWKVINK…LKLFDNFRST (273 aa). ATP contacts are provided by residues 29–34 and arginine 275; that span reads GSGKTL. The UvrD-like helicase C-terminal domain maps to 278–593; it reads PEIISLASKI…KLSTIHSAKG (316 aa). Positions 693 to 706 are cleaved as a propeptide — cleaved upon import into mitochondrion; the sequence is YSSLRGCKSVFRRI.

Belongs to the helicase family. UvrD subfamily. Mg(2+) serves as cofactor.

It is found in the mitochondrion inner membrane. The enzyme catalyses Couples ATP hydrolysis with the unwinding of duplex DNA by translocating in the 3'-5' direction.. It catalyses the reaction ATP + H2O = ADP + phosphate + H(+). Functionally, required for mitochondrial genome maintenance and mitochondrial DNA inheritance. This chain is ATP-dependent DNA helicase HMI1, mitochondrial (HMI1), found in Saccharomyces cerevisiae (strain ATCC 204508 / S288c) (Baker's yeast).